The following is a 260-amino-acid chain: uncharacterized protein (260 aa).

This is an uncharacterized protein from Caenorhabditis elegans.